Consider the following 359-residue polypeptide: DNA polymerase IV (359 aa).

One can recognise a UmuC domain in the interval 4-184; it reads IVHVDMDAFY…LPVNRIPGVG (181 aa). Positions 8 and 102 each coordinate Mg(2+). The active site involves glutamate 103.

The protein belongs to the DNA polymerase type-Y family. Monomer. The cofactor is Mg(2+).

The protein resides in the cytoplasm. It carries out the reaction DNA(n) + a 2'-deoxyribonucleoside 5'-triphosphate = DNA(n+1) + diphosphate. In terms of biological role, poorly processive, error-prone DNA polymerase involved in untargeted mutagenesis. Copies undamaged DNA at stalled replication forks, which arise in vivo from mismatched or misaligned primer ends. These misaligned primers can be extended by PolIV. Exhibits no 3'-5' exonuclease (proofreading) activity. May be involved in translesional synthesis, in conjunction with the beta clamp from PolIII. In Xanthomonas campestris pv. campestris (strain 8004), this protein is DNA polymerase IV.